We begin with the raw amino-acid sequence, 140 residues long: Transmembrane protein 107 (140 aa).

A run of 2 helical transmembrane segments spans residues 7–27 (LVPS…TLFW) and 53–73 (LVAA…GFLS). N-linked (GlcNAc...) asparagine glycosylation is present at N79. A run of 2 helical transmembrane segments spans residues 83-103 (SLLS…FVFE) and 113-133 (IFTF…IAVF).

Part of the tectonic-like complex (also named B9 complex). Interacts with TMEM237, TMEM231, MKS1 and TMEM216.

The protein resides in the membrane. The protein localises to the cell projection. It localises to the cilium. In terms of biological role, plays a role in cilia formation and embryonic patterning. Requires for normal Sonic hedgehog (Shh) signaling in the neural tube and acts in combination with GLI2 and GLI3 to pattern ventral and intermediate neuronal cell types. During ciliogenesis regulates the ciliary transition zone localization of some MKS complex proteins. This chain is Transmembrane protein 107, found in Mus musculus (Mouse).